Reading from the N-terminus, the 355-residue chain is Probable butyrate kinase (355 aa).

Belongs to the acetokinase family.

It localises to the cytoplasm. The catalysed reaction is butanoate + ATP = butanoyl phosphate + ADP. This Listeria welshimeri serovar 6b (strain ATCC 35897 / DSM 20650 / CCUG 15529 / CIP 8149 / NCTC 11857 / SLCC 5334 / V8) protein is Probable butyrate kinase.